We begin with the raw amino-acid sequence, 614 residues long: DBH-like monooxygenase protein 1 (614 aa).

The first 22 residues, 1–22 (MRPLRPWALLLGALLGAAAAAA), serve as a signal peptide directing secretion. At 23-592 (RRYPHVAVLD…SSSCLPCSLS (570 aa)) the chain is on the lumenal side. The DOMON domain maps to 35–148 (AAYRLLWGRR…STVRVIWAYH (114 aa)). Asn-114 carries N-linked (GlcNAc...) asparagine glycosylation. Tyr-203 is an active-site residue. 2 disulfides stabilise this stretch: Cys-205–Cys-257 and Cys-242–Cys-269. Residues His-235 and His-236 each coordinate Cu cation. Residue Asn-247 is glycosylated (N-linked (GlcNAc...) asparagine). Residues His-307, His-389, His-391, and Met-464 each contribute to the Cu cation site. Intrachain disulfides connect Cys-364–Cys-480, Cys-368–Cys-550, and Cys-443–Cys-465. His-389 is a catalytic residue. 2 N-linked (GlcNAc...) asparagine glycosylation sites follow: Asn-476 and Asn-517. A helical membrane pass occupies residues 593 to 613 (LTLLFVVYVASSTIGNFGPVV).

The protein belongs to the copper type II ascorbate-dependent monooxygenase family. The cofactor is Cu(2+).

It is found in the endoplasmic reticulum membrane. The sequence is that of DBH-like monooxygenase protein 1 (MOXD1) from Gallus gallus (Chicken).